We begin with the raw amino-acid sequence, 265 residues long: Urease accessory protein UreH (265 aa).

This sequence belongs to the UreD family. UreH, UreF and UreG form a complex that acts as a GTP-hydrolysis-dependent molecular chaperone, activating the urease apoprotein by helping to assemble the nickel containing metallocenter of UreC. The UreE protein probably delivers the nickel.

Its subcellular location is the cytoplasm. Functionally, required for maturation of urease via the functional incorporation of the urease nickel metallocenter. The protein is Urease accessory protein UreH of Helicobacter pylori (strain P12).